Reading from the N-terminus, the 380-residue chain is Alcohol dehydrogenase 2 (380 aa).

Residues Cys48, Thr50, His70, Cys100, Cys103, Cys106, Cys114, and Cys178 each contribute to the Zn(2+) site. 2 residues coordinate an alcohol: Thr50 and His70. Thr50 is an NAD(+) binding site. NAD(+)-binding positions include 203–208 (GLGAVG), Asp227, Arg232, Thr273, Val296, 296–298 (VGV), Phe323, and Arg373.

The protein belongs to the zinc-containing alcohol dehydrogenase family. In terms of assembly, homodimer. Homotetramer. Zn(2+) serves as cofactor.

The protein resides in the cytoplasm. The enzyme catalyses a primary alcohol + NAD(+) = an aldehyde + NADH + H(+). The catalysed reaction is a secondary alcohol + NAD(+) = a ketone + NADH + H(+). This chain is Alcohol dehydrogenase 2 (ADH2), found in Solanum lycopersicum (Tomato).